A 474-amino-acid chain; its full sequence is Transcription factor fscB (474 aa).

Disordered regions lie at residues 114-153 and 207-242; these read VDELELSSDTRSSLSPSSHNTTTGHETGLSSVTPPQSYWT and GKEVTKRNKRSRTEAQEASNSPCASSTADSQTNPAP. A compositionally biased stretch (low complexity) spans 120–131; the sequence is SSDTRSSLSPSS. Over residues 132–153 the composition is skewed to polar residues; it reads HNTTTGHETGLSSVTPPQSYWT. Over residues 207 to 221 the composition is skewed to basic and acidic residues; sequence GKEVTKRNKRSRTEA. Residues 222–240 are compositionally biased toward polar residues; that stretch reads QEASNSPCASSTADSQTNP.

The protein belongs to the POU transcription factor family. Class-3 subfamily.

The protein localises to the nucleus. In terms of biological role, transcription factor; part of the fragmented gene cluster that mediates the biosynthesis of fusarochromene, a tryptophan-derived metabolite closely related to a group of mycotoxins including fusarochromanone. This Fusarium equiseti (Fusarium scirpi) protein is Transcription factor fscB.